The following is a 778-amino-acid chain: Protein SPT2 homolog (778 aa).

Disordered regions lie at residues 1 to 21 (MDFHSVLKMAAAKPGSDGIAK), 50 to 625 (KKDE…AKPK), and 639 to 685 (VPKS…DDDD). Positions 1–665 (MDFHSVLKMA…PGHRPAMRPP (665 aa)) are important for interaction with DNA. The stretch at 44–83 (VQAFLRKKDEESRRKETVEKRKKEDLLAKRKELKHDRKAR) forms a coiled coil. Residues 50–78 (KKDEESRRKETVEKRKKEDLLAKRKELKH) are compositionally biased toward basic and acidic residues. Residues 114–135 (EEDQNDNMAAEGEEYMTEEELY) are compositionally biased toward acidic residues. A compositionally biased stretch (pro residues) spans 153–167 (QKVPKPAPGKKPPTP). Residues 190-227 (RPVKKEERLRTAEELKELEFLERKAQKADRKDPKRNEQ) show a composition bias toward basic and acidic residues. A coiled-coil region spans residues 193–221 (KKEERLRTAEELKELEFLERKAQKADRKD). The span at 242 to 269 (LKGTHSGNSKSSSTEQNGTIRKSSSDTG) shows a compositional bias: polar residues. Residues 270–286 (SRTEKSGSVFHTKESKK) show a composition bias toward basic and acidic residues. The span at 312-335 (SSQPSAASNSAFGRPSGSARPSGS) shows a compositional bias: low complexity. Composition is skewed to gly residues over residues 336-357 (SGPGRPLGGSGSSSGKSTGGSA) and 365-384 (GGSGSGSGKPMGGSGSGKPI). Low complexity predominate over residues 385–394 (GGLHSSHGSG). Over residues 395-417 (KPTGGTGSGSGKPTGASGSGSGK) the composition is skewed to gly residues. 2 stretches are compositionally biased toward low complexity: residues 418-493 (PTGS…SGSA) and 506-559 (GSGS…PSSS). Positions 588–604 (VRPNSTSVPGSARSSLG) are enriched in polar residues. The segment covering 662–671 (MRPPGPPLPP) has biased composition (pro residues). The interval 666-778 (GPPLPPITSS…QLKAAKKMSR (113 aa)) is important for interaction with histones. The stretch at 735 to 778 (REQQKEEARSLRLGIQEDLEELQREEEELKRKAKQLKAAKKMSR) forms a coiled coil.

The protein belongs to the SPT2 family. In terms of assembly, interacts with histones. Interacts with a heterotetrameric complex formed by histone H3 and H4, especially when the histone tetramer is not bound to DNA.

Its subcellular location is the nucleus. The protein localises to the nucleolus. Functionally, histone chaperone that stabilizes pre-existing histone tetramers and regulates replication-independent histone exchange on chromatin. Required for normal chromatin refolding in the coding region of transcribed genes, and for the suppression of spurious transcription. Binds DNA and histones and promotes nucleosome assembly (in vitro). Facilitates formation of tetrameric histone complexes containing histone H3 and H4. Modulates RNA polymerase 1-mediated transcription. Binds DNA, with a preference for branched DNA species, such as Y-form DNA and Holliday junction DNA. The sequence is that of Protein SPT2 homolog (spty2d1) from Xenopus tropicalis (Western clawed frog).